The sequence spans 394 residues: Chaperone protein DnaJ (394 aa).

Positions 4–68 (DYYEILGVSR…ELKARYDRFG (65 aa)) constitute a J domain. A CR-type zinc finger spans residues 136–218 (GGEKQIRISH…CNGEGLAQTT (83 aa)). Zn(2+) contacts are provided by cysteine 149, cysteine 152, cysteine 166, cysteine 169, cysteine 192, cysteine 195, cysteine 206, and cysteine 209. CXXCXGXG motif repeat units follow at residues 149–156 (CNVCGGSG), 166–173 (CPTCGGSG), 192–199 (CPTCGGSG), and 206–213 (CYNCNGEG).

This sequence belongs to the DnaJ family. In terms of assembly, homodimer. The cofactor is Zn(2+).

Its subcellular location is the cytoplasm. In terms of biological role, participates actively in the response to hyperosmotic and heat shock by preventing the aggregation of stress-denatured proteins and by disaggregating proteins, also in an autonomous, DnaK-independent fashion. Unfolded proteins bind initially to DnaJ; upon interaction with the DnaJ-bound protein, DnaK hydrolyzes its bound ATP, resulting in the formation of a stable complex. GrpE releases ADP from DnaK; ATP binding to DnaK triggers the release of the substrate protein, thus completing the reaction cycle. Several rounds of ATP-dependent interactions between DnaJ, DnaK and GrpE are required for fully efficient folding. Also involved, together with DnaK and GrpE, in the DNA replication of plasmids through activation of initiation proteins. This chain is Chaperone protein DnaJ, found in Synechococcus sp. (strain JA-2-3B'a(2-13)) (Cyanobacteria bacterium Yellowstone B-Prime).